Reading from the N-terminus, the 107-residue chain is Large ribosomal subunit protein bL21 (107 aa).

It belongs to the bacterial ribosomal protein bL21 family. Part of the 50S ribosomal subunit. Contacts protein L20.

This protein binds to 23S rRNA in the presence of protein L20. The chain is Large ribosomal subunit protein bL21 from Pseudothermotoga lettingae (strain ATCC BAA-301 / DSM 14385 / NBRC 107922 / TMO) (Thermotoga lettingae).